A 352-amino-acid polypeptide reads, in one-letter code: 2'-dehydrokanamycin reductase (352 aa).

The protein belongs to the NAD(P)-dependent epimerase/dehydratase family.

It carries out the reaction 2'-dehydrokanamycin A + NADPH + H(+) = kanamycin A + NADP(+). It functions in the pathway antibiotic biosynthesis; kanamycin biosynthesis. Functionally, mediates the conversion of 2'-dehydrokanamycin A into kanamycin A. The protein is 2'-dehydrokanamycin reductase (kanK) of Streptomyces kanamyceticus.